Consider the following 164-residue polypeptide: MKVILREDFINLGKEGDIVDVKDGFARNYLLPKGFAVFSNKHNIDIFSQKKRAILKRQESRRKMAVELKEKLDKVNLEFIMQSNDSGKLFHSINSSNIADELLKLGFEIERRKIDMHHGALKAFGTYNVIIKLYEGISSVITVEIKREEKKNSLKKSKSVKKEV.

Belongs to the bacterial ribosomal protein bL9 family.

Its function is as follows. Binds to the 23S rRNA. In Borrelia recurrentis (strain A1), this protein is Large ribosomal subunit protein bL9.